The following is a 507-amino-acid chain: ATP synthase subunit alpha, chloroplastic (507 aa).

Residue 170–177 coordinates ATP; that stretch reads GDRQTGKT.

Belongs to the ATPase alpha/beta chains family. In terms of assembly, F-type ATPases have 2 components, CF(1) - the catalytic core - and CF(0) - the membrane proton channel. CF(1) has five subunits: alpha(3), beta(3), gamma(1), delta(1), epsilon(1). CF(0) has four main subunits: a, b, b' and c.

The protein localises to the plastid. It localises to the chloroplast thylakoid membrane. It carries out the reaction ATP + H2O + 4 H(+)(in) = ADP + phosphate + 5 H(+)(out). Functionally, produces ATP from ADP in the presence of a proton gradient across the membrane. The alpha chain is a regulatory subunit. This chain is ATP synthase subunit alpha, chloroplastic, found in Acorus calamus var. americanus (American sweet flag).